The following is a 162-amino-acid chain: Interleukin-15 (162 aa).

An N-terminal signal peptide occupies residues 1 to 29 (MRISKPHLRITSIQCYVCLLLNTHFLTEA). A propeptide spanning residues 30-48 (GIRVFILGCISAGIPKTEA) is cleaved from the precursor. 2 disulfide bridges follow: Cys83/Cys133 and Cys90/Cys136. Asn119, Asn127, and Asn143 each carry an N-linked (GlcNAc...) asparagine glycan.

Belongs to the IL-15/IL-21 family.

The protein resides in the secreted. In terms of biological role, cytokine that plays a major role in the development of inflammatory and protective immune responses to microbial invaders and parasites by modulating immune cells of both the innate and adaptive immune systems. Stimulates the proliferation of natural killer cells, T-cells and B-cells and promotes the secretion of several cytokines. In monocytes, induces the production of IL8 and monocyte chemotactic protein 1/CCL2, two chemokines that attract neutrophils and monocytes respectively to sites of infection. Unlike most cytokines, which are secreted in soluble form, IL15 is expressed in association with its high affinity IL15RA on the surface of IL15-producing cells and delivers signals to target cells that express IL2RB and IL2RG receptor subunits. Binding to its receptor triggers the phosphorylation of JAK1 and JAK3 and the recruitment and subsequent phosphorylation of signal transducer and activator of transcription-3/STAT3 and STAT5. In mast cells, induces the rapid tyrosine phosphorylation of STAT6 and thereby controls mast cell survival and release of cytokines such as IL4. The chain is Interleukin-15 (IL15) from Marmota himalayana (Himalayan marmot).